Here is a 107-residue protein sequence, read N- to C-terminus: L-rhamnose mutarotase (107 aa).

Tyr18 contacts substrate. His22 functions as the Proton donor in the catalytic mechanism. Substrate contacts are provided by residues Tyr41 and 76–77 (WW).

It belongs to the rhamnose mutarotase family. In terms of assembly, homodimer.

Its subcellular location is the cytoplasm. It carries out the reaction alpha-L-rhamnose = beta-L-rhamnose. It participates in carbohydrate metabolism; L-rhamnose metabolism. Functionally, involved in the anomeric conversion of L-rhamnose. The protein is L-rhamnose mutarotase of Paraburkholderia xenovorans (strain LB400).